The sequence spans 281 residues: Phosphate import ATP-binding protein PstB (281 aa).

The ABC transporter domain maps to Phe33–Ile276. Gly67–Ser74 provides a ligand contact to ATP.

This sequence belongs to the ABC transporter superfamily. Phosphate importer (TC 3.A.1.7) family. As to quaternary structure, the complex is composed of two ATP-binding proteins (PstB), two transmembrane proteins (PstC and PstA) and a solute-binding protein (PstS).

It is found in the cell membrane. The catalysed reaction is phosphate(out) + ATP + H2O = ADP + 2 phosphate(in) + H(+). Its function is as follows. Part of the ABC transporter complex PstSACB involved in phosphate import. Responsible for energy coupling to the transport system. This chain is Phosphate import ATP-binding protein PstB, found in Mycoplasma mobile (strain ATCC 43663 / 163K / NCTC 11711) (Mesomycoplasma mobile).